A 308-amino-acid polypeptide reads, in one-letter code: MTKTLVFGHKNPDTDTICSAISYAELKKAQGADIEAVRLGELNSETAFVLDYFQVTAPRLVQTVANEVSEVALVDHNERQQSVDDIDDVTVTAVVDHHRIANFETSDPLYYRAEPVGCTTTILLKMFRENEVEVSKTVAGLMLSAIISDTLLFQSPTCTEEDKVAAQKLAQIADVDIQSYGMEMLKAGADVSKKTVAELLLDAKEFNMNDNKVEIAQINVVDVNDVLSRRAEVEALMTQNIVDKGLDLYLFVITNILTNDSVGIAIGSKTAVVEEAYGVKFVENQAPLKGVVSRKKQVVPILTDTFAK.

Residues His-9, Asp-13, Asp-15, Asp-75, His-97, and Asp-149 each contribute to the Mn(2+) site.

It belongs to the PPase class C family. It depends on Mn(2+) as a cofactor.

It localises to the cytoplasm. It catalyses the reaction diphosphate + H2O = 2 phosphate + H(+). The chain is Probable manganese-dependent inorganic pyrophosphatase from Listeria monocytogenes serotype 4b (strain CLIP80459).